A 211-amino-acid chain; its full sequence is Protein GrpE (211 aa).

The tract at residues 1-43 (MTDETTKNGPDATAADAAADAAANVEIDNSVQEEAKQPDPLEL) is disordered. Over residues 11-23 (DATAADAAADAAA) the composition is skewed to low complexity. Positions 33 to 43 (EEAKQPDPLEL) are enriched in basic and acidic residues.

Belongs to the GrpE family. In terms of assembly, homodimer.

The protein localises to the cytoplasm. In terms of biological role, participates actively in the response to hyperosmotic and heat shock by preventing the aggregation of stress-denatured proteins, in association with DnaK and GrpE. It is the nucleotide exchange factor for DnaK and may function as a thermosensor. Unfolded proteins bind initially to DnaJ; upon interaction with the DnaJ-bound protein, DnaK hydrolyzes its bound ATP, resulting in the formation of a stable complex. GrpE releases ADP from DnaK; ATP binding to DnaK triggers the release of the substrate protein, thus completing the reaction cycle. Several rounds of ATP-dependent interactions between DnaJ, DnaK and GrpE are required for fully efficient folding. The protein is Protein GrpE of Rhizobium etli (strain ATCC 51251 / DSM 11541 / JCM 21823 / NBRC 15573 / CFN 42).